Here is a 1129-residue protein sequence, read N- to C-terminus: Translation initiation factor IF-2 (1129 aa).

Low complexity-rich tracts occupy residues 33 to 42 (AARSHSSSIS) and 56 to 99 (GGSP…AAKP). Disordered stretches follow at residues 33 to 462 (AARS…IGEN) and 485 to 515 (SLAR…ETAR). Residues 100–112 (SPKPSAPSRPEAP) are compositionally biased toward pro residues. Low complexity predominate over residues 135 to 147 (STPAAAAPAAAPS). Pro residues predominate over residues 148–161 (APAPSAPTPRPKPT). Over residues 162–175 (APKASAPAPTASAP) the composition is skewed to low complexity. 2 stretches are compositionally biased toward pro residues: residues 176 to 191 (SAPP…PAPA) and 211 to 221 (PTAPPTRPQPK). Residues 257–273 (GQRPGVSPRPSGPPGQR) show a composition bias toward low complexity. Over residues 431–445 (GRPDWDDSAKLEALR) the composition is skewed to basic and acidic residues. Composition is skewed to basic residues over residues 490–499 (SKPRTKHKPA) and 506–515 (IRKRRKETAR). Positions 621–793 (RRPPVVTVMG…ILLVTEVEDL (173 aa)) constitute a tr-type G domain. The G1 stretch occupies residues 630-637 (GHVDHGKT). GTP is bound at residue 630–637 (GHVDHGKT). The interval 655–659 (GITQH) is G2. Residues 680 to 683 (DTPG) are G3. GTP-binding positions include 680 to 684 (DTPGH) and 734 to 737 (NKID). The tract at residues 734–737 (NKID) is G4. A G5 region spans residues 770–772 (SAL).

This sequence belongs to the TRAFAC class translation factor GTPase superfamily. Classic translation factor GTPase family. IF-2 subfamily.

It is found in the cytoplasm. Its function is as follows. One of the essential components for the initiation of protein synthesis. Protects formylmethionyl-tRNA from spontaneous hydrolysis and promotes its binding to the 30S ribosomal subunits. Also involved in the hydrolysis of GTP during the formation of the 70S ribosomal complex. This is Translation initiation factor IF-2 from Synechococcus sp. (strain CC9311).